An 819-amino-acid chain; its full sequence is Lon protease (819 aa).

Over residues 1–14 the composition is skewed to polar residues; the sequence is MNSTNNTDSQNLDP. Residues 1-41 are disordered; that stretch reads MNSTNNTDSQNLDPNASEVEKLLDESAEAEEKTDDHTPPSE. Residues 18–38 show a composition bias toward basic and acidic residues; it reads EVEKLLDESAEAEEKTDDHTP. Residues 42 to 239 enclose the Lon N-terminal domain; that stretch reads LFILPLNKRP…KALVLLKKEL (198 aa). 392–399 contributes to the ATP binding site; it reads GPPGVGKT. The region spanning 634-818 is the Lon proteolytic domain; it reads KTPVGVATGL…DDVFKIAFPG (185 aa). Residues serine 724 and lysine 767 contribute to the active site.

It belongs to the peptidase S16 family. In terms of assembly, homohexamer. Organized in a ring with a central cavity.

Its subcellular location is the cytoplasm. It carries out the reaction Hydrolysis of proteins in presence of ATP.. In terms of biological role, ATP-dependent serine protease that mediates the selective degradation of mutant and abnormal proteins as well as certain short-lived regulatory proteins. Required for cellular homeostasis and for survival from DNA damage and developmental changes induced by stress. Degrades polypeptides processively to yield small peptide fragments that are 5 to 10 amino acids long. Binds to DNA in a double-stranded, site-specific manner. The protein is Lon protease of Chlamydia muridarum (strain MoPn / Nigg).